The chain runs to 543 residues: Rop guanine nucleotide exchange factor 11 (543 aa).

Residues glutamine 61–valine 89 are disordered. Residues methionine 95 to alanine 456 enclose the PRONE domain.

As to quaternary structure, interacts with ARAC4/ROP2, ARAC3/ROP, ARAC9/ROP8, PHYA and PHYB. Highly expressed in elongating regions of roots and pollen grains. Expressed in flowers, and at lower levels in leaves and stems.

Its subcellular location is the cytoplasm. Guanine-nucleotide exchange factor (GEF) that acts as an activator of Rop (Rho of plants) GTPases by promoting the exchange of GDP for GTP. Functions as a light-signaling switch that functions in root growth and development through the activation of Rop in a phytochrome-dependent manner. May act as a negative regulator of phytochrome-mediated primary root development. The sequence is that of Rop guanine nucleotide exchange factor 11 (ROPGEF11) from Arabidopsis thaliana (Mouse-ear cress).